We begin with the raw amino-acid sequence, 118 residues long: MARIAGINIPDHKHTVIALTAIFGIGKTRSQSICASTGIAENVKISELSEEQIDILRDAVAKFVVEGDLRREVTLSIKRLMDLGCYRGLRHRRGLPVRGQRTKTNARTRKGPRKPIKK.

The segment at G94–K118 is disordered.

It belongs to the universal ribosomal protein uS13 family. As to quaternary structure, part of the 30S ribosomal subunit. Forms a loose heterodimer with protein S19. Forms two bridges to the 50S subunit in the 70S ribosome.

Functionally, located at the top of the head of the 30S subunit, it contacts several helices of the 16S rRNA. In the 70S ribosome it contacts the 23S rRNA (bridge B1a) and protein L5 of the 50S subunit (bridge B1b), connecting the 2 subunits; these bridges are implicated in subunit movement. Contacts the tRNAs in the A and P-sites. The chain is Small ribosomal subunit protein uS13 from Erwinia tasmaniensis (strain DSM 17950 / CFBP 7177 / CIP 109463 / NCPPB 4357 / Et1/99).